The primary structure comprises 146 residues: Transcriptional regulator MraZ (146 aa).

SpoVT-AbrB domains lie at 7-54 and 83-126; these read NATN…GLDL and GVFV…QPEA.

This sequence belongs to the MraZ family. As to quaternary structure, forms oligomers.

It is found in the cytoplasm. The protein localises to the nucleoid. The polypeptide is Transcriptional regulator MraZ (Rhizobium rhizogenes (strain K84 / ATCC BAA-868) (Agrobacterium radiobacter)).